A 2371-amino-acid polypeptide reads, in one-letter code: Reducing polyketide synthase DEP5 (2371 aa).

A Ketosynthase family 3 (KS3) domain is found at 47 to 477 (LEPIAVVGMG…GTNAHTIIES (431 aa)). Active-site for beta-ketoacyl synthase activity residues include Cys221, His358, and His399. The malonyl-CoA:ACP transacylase (MAT) domain stretch occupies residues 593-905 (VFTGQGAQWA…QYLPTLIRGS (313 aa)). The active-site For malonyltransferase activity is Ser685. The segment at 982–1120 (HDVLGQLTIG…GSIRINTSNK (139 aa)) is N-terminal hotdog fold. Residues 982–1158 (HDVLGQLTIG…FNYGPTFQDM (177 aa)) form a dehydratase (DH) domain region. A PKS/mFAS DH domain is found at 982–1286 (HDVLGQLTIG…CTAYEAAIPQ (305 aa)). The Proton acceptor; for dehydratase activity role is filled by His1014. Residues 1132 to 1286 (PQRASGKLWN…CTAYEAAIPQ (155 aa)) are C-terminal hotdog fold. Asp1195 (proton donor; for dehydratase activity) is an active-site residue. The tract at residues 1656–1964 (GKVEAGKVVF…QSLSSTETVL (309 aa)) is enoyl reductase (ER) domain. The tract at residues 1988-2163 (ATYLLVGCLG…KHACAVVLPM (176 aa)) is ketoreductase (KR) domain. Positions 2286–2364 (SLVRDHFISK…KFAELVCAAQ (79 aa)) constitute a Carrier domain. Position 2323 is an O-(pantetheine 4'-phosphoryl)serine (Ser2323).

Its pathway is polyketide biosynthesis. Functionally, part of the gene cluster that mediates the biosynthesis of depudecin, a highly oxidized eleven-carbon linear polyketide that acts as a histone deacetylase (HDAC) inhibitor and makes a small contribution to pathogenesis. The reducing polyketide synthase DEP5 is the central enzyme in depudecin biosynthesis by yielding the backbone polyketide chain. The monooxygenases DEP2 and DEP4, as well as the uncharacterized protein DEP1, then act as tailoring enzymes to modify the intermediate polyketide chain into depudecin. The chain is Reducing polyketide synthase DEP5 from Fusarium langsethiae.